The primary structure comprises 271 residues: Expansin-B1 (271 aa).

An N-terminal signal peptide occupies residues 1 to 24 (MQLFPVILPTLCVFLHLLISGSGS). The 112-residue stretch at 58-169 (GGACGYGSLV…RRTACKYRGK (112 aa)) folds into the Expansin-like EG45 domain. Intrachain disulfides connect cysteine 61–cysteine 90, cysteine 93–cysteine 164, and cysteine 98–cysteine 104. The Expansin-like CBD domain maps to 182–263 (YWLSLLIEYE…NWVPKATYTS (82 aa)). Asparagine 242 is a glycosylation site (N-linked (GlcNAc...) asparagine).

It belongs to the expansin family. Expansin B subfamily.

Its subcellular location is the secreted. The protein localises to the cell wall. It localises to the membrane. Functionally, may cause loosening and extension of plant cell walls by disrupting non-covalent bonding between cellulose microfibrils and matrix glucans. No enzymatic activity has been found. This chain is Expansin-B1 (EXPB1), found in Arabidopsis thaliana (Mouse-ear cress).